A 623-amino-acid chain; its full sequence is Low affinity potassium transport system protein Kup (623 aa).

The next 12 helical transmembrane spans lie at 10-30, 47-67, 102-122, 138-158, 166-186, 214-234, 248-268, 277-297, 338-358, 364-384, 396-416, and 420-440; these read LSAVTLAAIGVVYGDIGTSPL, PDVVFGFLSLIFWMLILIVSV, ILVILGLIGGSFFYGEVVITP, PALDPYIVPCSIAVLTLLFVI, VGKLFAPVMLVWFLTLALLGL, VSFFALGAVVLAITGVEALYA, WFTVVLPSLVLNYFGQGALLL, PFFLLAPDWALIPLLILATLA, IYIPVINWTLYLAVVLVIVGF, LAAAYGIAVTGTMVITSVLFC, FFVYFLLVALLVIDVPMFSAN, and LFSGGWLPLSLGLVMFIIMTT.

It belongs to the HAK/KUP transporter (TC 2.A.72) family.

It is found in the cell inner membrane. It carries out the reaction K(+)(in) + H(+)(in) = K(+)(out) + H(+)(out). Responsible for the low-affinity transport of potassium into the cell. Likely operates as a K(+):H(+) symporter. This Yersinia enterocolitica serotype O:8 / biotype 1B (strain NCTC 13174 / 8081) protein is Low affinity potassium transport system protein Kup.